Here is a 198-residue protein sequence, read N- to C-terminus: MADQRQRSLSTSGESLYHVLGLDKNATSDDIKKSYRKLALKYHPDKNPDNPEAADKFKEINNAHAILTDATKRNIYDKYGSLGLYVAEQFGEENVNTYFVLSSWWAKALFVVCGLLTCCYCCCCLCCCFNCCCGKCKPKAPEGEETEFYVSPEDLEAQLQSDEREATDTPIVIQPASATETTQLTADSHPSYHTDGFN.

S8, S10, S12, and S15 each carry phosphoserine. Residues G13–L82 form the J domain. Y17 is modified (phosphotyrosine). Residue K56 is modified to N6-acetyllysine. Residue S151 is modified to Phosphoserine.

In terms of assembly, homodimer. Interacts with the chaperone complex consisting of HSC70 and SGTA. Interacts with ZDHHC13 (via ANK repeats). Interacts with ZDHHC17 (via ANK repeats). Interacts with SYT1, SYT5 and SYT7, and with SYT9, forming a complex with SNAP25. The interaction with SYT9 is stimulated tenfold in presence of calcium. In terms of processing, formation of the chaperone complex DNAJC5/HSC70 is not regulated by phosphorylation. Ser-10 phosphorylation induces an order-to-disorder transition triggering the interaction with Lys-58. This conformational switch modulates DNAJC5's cellular functions by reducing binding to syntaxin and synaptogamin without altering HSC70 interactions. Palmitoylated. Could be palmitoylated by DHHC3, DHHC7, DHHC15 and DHHC17. Palmitoylation occurs probably in the cysteine-rich domain and regulates DNAJC5 membrane attachment.

It localises to the cytoplasm. It is found in the cytosol. The protein localises to the membrane. The protein resides in the cytoplasmic vesicle. Its subcellular location is the secretory vesicle. It localises to the chromaffin granule membrane. It is found in the melanosome. The protein localises to the cell membrane. Acts as a co-chaperone for the SNARE protein SNAP-25. Involved in the calcium-mediated control of a late stage of exocytosis. Acts as a general chaperone in regulated exocytosis. May have an important role in presynaptic function. May be involved in calcium-dependent neurotransmitter release at nerve endings. The chain is DnaJ homolog subfamily C member 5 from Mus musculus (Mouse).